A 185-amino-acid chain; its full sequence is MPLLFVLLSYLLGTFPSAYLAGYLSTDRDIRLMGDHNMGAQNAYRCLGRGWGLAVFVFDLAKGSLAITLALAAGLSPGWVMFCGLAAVLGHNWPVWLGFRGGRGEATAIGVMLLIATQPMLIMGGLGLLVLLFTSSVIAASAVMFGLLWLAVILYGLPGGVVAYSIGLPVVVGLTHFIRSRKNRL.

6 helical membrane-spanning segments follow: residues 1–21 (MPLLFVLLSYLLGTFPSAYLA), 47–67 (LGRGWGLAVFVFDLAKGSLAI), 69–89 (LALAAGLSPGWVMFCGLAAVL), 113–133 (LLIATQPMLIMGGLGLLVLLF), 137–157 (VIAASAVMFGLLWLAVILYGL), and 158–178 (PGGVVAYSIGLPVVVGLTHFI).

It belongs to the PlsY family. Probably interacts with PlsX.

It is found in the cell membrane. It catalyses the reaction an acyl phosphate + sn-glycerol 3-phosphate = a 1-acyl-sn-glycero-3-phosphate + phosphate. It functions in the pathway lipid metabolism; phospholipid metabolism. Catalyzes the transfer of an acyl group from acyl-phosphate (acyl-PO(4)) to glycerol-3-phosphate (G3P) to form lysophosphatidic acid (LPA). This enzyme utilizes acyl-phosphate as fatty acyl donor, but not acyl-CoA or acyl-ACP. The protein is Glycerol-3-phosphate acyltransferase 4 of Dehalococcoides mccartyi (strain ATCC BAA-2266 / KCTC 15142 / 195) (Dehalococcoides ethenogenes (strain 195)).